A 446-amino-acid polypeptide reads, in one-letter code: Keratin, type I cytoskeletal 25 (446 aa).

Residues 1–74 (MSLRLSSGSR…VNEGGLLSGN (74 aa)) are head. The coil 1A stretch occupies residues 75–110 (EKVTMQNLNDRLASYLDNVQALQEANADLEQKIKGW). Positions 75-390 (EKVTMQNLND…LLIGGDEGAC (316 aa)) constitute an IF rod domain. The tract at residues 111–132 (YEKFGPGSCRGLDHDYSRYFPI) is linker 1. The tract at residues 133 to 224 (IDDLKNQIIT…KNHKEEMQAL (92 aa)) is coil 1B. The linker 12 stretch occupies residues 225–247 (QCAAGGNVNVEMNAAPGVDLTVL). The coil 2 stretch occupies residues 248-386 (LNNMRAEYEA…ETYCLLIGGD (139 aa)). The interval 387–446 (EGACKSSSYKSKDYGSGNAGNQIKDPVKAIVVKKVLEEVDQRSKILTTRLHSLEEKSQSN) is tail. Phosphoserine is present on serine 438.

Belongs to the intermediate filament family. As to quaternary structure, heterodimer of a type I and a type II keratin. Heterodimer with type II keratin KRT5 leading to the formation of keratin intermediate filament (KIF) network. Interacts with KRT6A to form filaments.

It localises to the cytoplasm. Its function is as follows. Essential for the proper assembly of type I and type II keratin protein complexes and formation of keratin intermediate filaments in the inner root sheath (irs). Plays a role in the cytoskeleton organization. The protein is Keratin, type I cytoskeletal 25 of Mus musculus (Mouse).